We begin with the raw amino-acid sequence, 465 residues long: Cysteine--tRNA ligase (465 aa).

Residue Cys29 participates in Zn(2+) binding. The 'HIGH' region signature appears at Pro31–Asn41. The Zn(2+) site is built by Cys209, His234, and Glu238. The 'KMSKS' region motif lies at Lys266–Ser270. Lys269 is a binding site for ATP. Residue Ser270 is modified to Phosphoserine.

It belongs to the class-I aminoacyl-tRNA synthetase family. In terms of assembly, monomer. Zn(2+) serves as cofactor.

The protein localises to the cytoplasm. It catalyses the reaction tRNA(Cys) + L-cysteine + ATP = L-cysteinyl-tRNA(Cys) + AMP + diphosphate. This chain is Cysteine--tRNA ligase, found in Bacillus cereus (strain ATCC 10987 / NRS 248).